A 188-amino-acid polypeptide reads, in one-letter code: Large ribosomal subunit protein bL32m (188 aa).

Zn(2+) is bound by residues C110, C113, C123, and C126. Residues G162–N188 form a disordered region. A compositionally biased stretch (basic and acidic residues) spans P165–R181.

Belongs to the bacterial ribosomal protein bL32 family. In terms of assembly, component of the mitochondrial ribosome large subunit (39S) which comprises a 16S rRNA and about 50 distinct proteins. MRPL32 precursor is processed by the m-AAA protease (composed of AFG3L2 and SPG7), which cleaves the N-terminal transit peptide. Cleavage by the m-AAA protease takes place prior to assembly into the large subunit, an essential step for mitochondrial ribosome (mitoribosome) assembly. Proper processing by the m-AAA protease is dependent on the zinc-binding region within the tightly folded C-terminal domain of MRPL32: zinc-dependent folding halts degradation initiated from the N-terminus and triggers the release of mature MRPL32.

The protein localises to the mitochondrion. In terms of biological role, component of the mitochondrial large ribosomal subunit (mt-LSU). The mitochondrial ribosome (mitoribosome) is a large ribonucleoprotein complex responsible for the synthesis of proteins inside mitochondria. The protein is Large ribosomal subunit protein bL32m (MRPL32) of Bos taurus (Bovine).